The chain runs to 431 residues: Glutamate--tRNA ligase 1 (431 aa).

A 'HIGH' region motif is present at residues P6–N16. Positions K235–R239 match the 'KMSKS' region motif. K238 is an ATP binding site.

Belongs to the class-I aminoacyl-tRNA synthetase family. Glutamate--tRNA ligase type 1 subfamily. As to quaternary structure, monomer.

The protein resides in the cytoplasm. It catalyses the reaction tRNA(Glu) + L-glutamate + ATP = L-glutamyl-tRNA(Glu) + AMP + diphosphate. Its function is as follows. Catalyzes the attachment of glutamate to tRNA(Glu) in a two-step reaction: glutamate is first activated by ATP to form Glu-AMP and then transferred to the acceptor end of tRNA(Glu). This is Glutamate--tRNA ligase 1 from Campylobacter jejuni subsp. jejuni serotype O:23/36 (strain 81-176).